Reading from the N-terminus, the 504-residue chain is Argininosuccinate lyase 2 (504 aa).

The protein belongs to the lyase 1 family. Argininosuccinate lyase subfamily.

It localises to the cytoplasm. It catalyses the reaction 2-(N(omega)-L-arginino)succinate = fumarate + L-arginine. Its pathway is amino-acid biosynthesis; L-arginine biosynthesis; L-arginine from L-ornithine and carbamoyl phosphate: step 3/3. The sequence is that of Argininosuccinate lyase 2 from Agrobacterium fabrum (strain C58 / ATCC 33970) (Agrobacterium tumefaciens (strain C58)).